The primary structure comprises 97 residues: HssA/B-like protein 27 (97 aa).

The protein belongs to the hssA/B family.

This Dictyostelium discoideum (Social amoeba) protein is HssA/B-like protein 27 (hssl27).